The chain runs to 340 residues: Nitrilase (340 aa).

The region spanning 7–273 is the CN hydrolase domain; it reads IRAAAVQIAP…EGMVVADLDM (267 aa). Glu-47 (proton acceptor) is an active-site residue. Lys-129 is a catalytic residue. Catalysis depends on Cys-163, which acts as the Nucleophile.

The protein belongs to the carbon-nitrogen hydrolase superfamily. Nitrilase family. Forms oligomers.

It catalyses the reaction a nitrile + 2 H2O = a carboxylate + NH4(+). It carries out the reaction phenylpropanonitrile + 2 H2O = 3-phenylpropanoate + NH4(+). The catalysed reaction is an aliphatic nitrile + 2 H2O = a carboxylate + NH4(+). Its activity is regulated as follows. Highly resistant to various miscible cosolvents and tolerates high substrate concentrations. In terms of biological role, catalyzes the hydrolysis of a broad range of nitriles to yield their corresponding carboxylic acid and ammonia. In vitro, shows high activity toward benzylic/unsaturated nitriles. The preferred substrate is trans-cinnamonitrile, followed by mono/di-cyanopyridines and aromatic substituted nitriles, with a moderate activity toward 3-phenylpropionitrile. Shows weaker activity toward the common dinitrile fumaronitrile. Also shows weak activity toward some aliphatic nitriles, including adiponitrile and glutaronitrile, and the arylacetonitrile 2-thiopheneacetonitrile. In Paraburkholderia phymatum (strain DSM 17167 / CIP 108236 / LMG 21445 / STM815) (Burkholderia phymatum), this protein is Nitrilase.